We begin with the raw amino-acid sequence, 156 residues long: Small ribosomal subunit protein uS7 (156 aa).

It belongs to the universal ribosomal protein uS7 family. Part of the 30S ribosomal subunit. Contacts proteins S9 and S11.

Its function is as follows. One of the primary rRNA binding proteins, it binds directly to 16S rRNA where it nucleates assembly of the head domain of the 30S subunit. Is located at the subunit interface close to the decoding center, probably blocks exit of the E-site tRNA. In Mycobacterium sp. (strain JLS), this protein is Small ribosomal subunit protein uS7.